Consider the following 965-residue polypeptide: MSGSTKVLDPAFQGVGQKPGTEIWRIENFEPVPVPKSEHGKFYMGDTYIVLQTTQNKGGAYLFDIHFWIGKDTSQDEAGTAAVKTVELDAALGGRAVQYREIQGHESDKFLSYFKPCIIPLEGGVASGFKKPEEEEFETRLYTCKGKRAVHLKQVPFARSSLNHDDVFILDTKEKIYQFNGANSNIQERAKALVVIQYLKDKFHEGTSDVAIVDDGKLDTESDSGEFWVLFGGFAPIARKVASEDEIIPETTPPKLYSIADGQVESIDGDLSKSMLENNKCYLLDCGSEIFIWVGRVTQVEERKTAIQAAEDFVASENRPKATRITRVIQGYEPHSFKSNFDSWPSGSATPANEEGRGKVAALLKQQGVGLKGLSKSTPVNEDIPPLLEGGGKLEVWYIDANSKTVLSKDHVGKLYSGDCYLVLYTYHSGERKEDYFLCCWFGKNSNQEDQETAVRLASTMTNSLKGRPVQARIFEGKEPPQFVALFQHMVVLKGGLSSGYKNSMTEKGSSGETYTPESIALIQVSGTGVHNNKALQVEAVATSLNSYDCFLLQSGTSMFLWVGNHSTHEQQELAAKVAEFLKPGTTIKHAKEGTESSSFWFALGGKQNFTSKKVSSETVRDPHLFSFSFNRGKFQVEEIHNFDQDDLLTEEMHLLDTHAEVFVWVGQCVDPKEKQTAFEIGQRYINLAGSLEGLSPKVPLYKITEGNEPCFFTTYFSWDSTKATVQGNSYQKKAALLLGTHHVVEDQSSSGNQGPRQRAAALAALTSAFNSSSGRTSSPSRDRSNGSQGGPRQRAEALAALTSAFNSSPSSKSPPRRSGLTSQASQRAAAVAALSQVLTAEKKKSPDTSPSAEAKDEKAFSEVEATEEATEAKEEEEVSPAAEASAEEAKPKQDDSEVETTGVTFTYERLQAKSEKPVTGIDFKRREAYLSEVEFKTVFGMEKESFYKLPGWKQDLLKKKFNLF.

Gelsolin-like repeat units lie at residues 27-79 (ENFE…DEAG), 150-190 (VHLK…QERA), 262-304 (GQVE…EERK), 401-452 (ANSK…EDQE), 533-573 (NKAL…EQQE), and 635-676 (FQVE…KEKQ). Composition is skewed to low complexity over residues 769–780 (AFNSSSGRTSSP) and 808–828 (SSPSSKSPPRRSGLTSQASQR). Disordered stretches follow at residues 769-828 (AFNS…ASQR) and 840-906 (TAEK…GVTF). A compositionally biased stretch (acidic residues) spans 865 to 879 (EATEEATEAKEEEEV). Position 880 is a phosphoserine (serine 880). An HP domain is found at 900 to 965 (ETTGVTFTYE…DLLKKKFNLF (66 aa)).

This sequence belongs to the villin/gelsolin family. As to expression, expressed in all tissues examined, including root hairs.

It is found in the cytoplasm. Its subcellular location is the cytoskeleton. Functionally, binds actin and actin filament bundles in a Ca(2+)-insensitive manner, but severs actin filaments in a calcium-dependent manner, regardless of the presence or not of VLN1 (AC O81643). Acts redundantly with VLN2 (AC O81644) to generate thick actin filament bundles, to regulate directional organ growth and in sclerenchyma development. The sequence is that of Villin-3 from Arabidopsis thaliana (Mouse-ear cress).